Consider the following 3365-residue polypeptide: Probable serine/threonine-protein kinase roco9 (3365 aa).

5 disordered regions span residues 1-177 (MTSI…KSSK), 397-497 (ESTE…QPPQ), 944-985 (PIKK…GFLS), 1044-1098 (IHQQ…NNKI), and 1261-1301 (QNNL…ISKG). Over residues 8 to 27 (FDKKSKRSNEDTGEKEETKK) the composition is skewed to basic and acidic residues. Low complexity-rich tracts occupy residues 51-84 (LQQLQQQQDDEQQQQQQQFMEGDNNNNNTNSLNT), 100-116 (STNSTSYSSLRSSSTRS), 137-169 (SQTSESSDITSTSTTSPTMSAASSSSSSGTVKT), and 397-415 (ESTEVLTLSLSSSTSTLEP). The Rho-GAP domain maps to 243-437 (TPLYSLIKRQ…RLPQQSSDDN (195 aa)). A compositionally biased stretch (polar residues) spans 421–434 (PLSTSTQRLPQQSS). 5 stretches are compositionally biased toward low complexity: residues 435–445 (DDNSNNDNNNK), 457–489 (NNDNNNINNDNGEIIPPSIQVTPPTSPQTQPKQ), 959–974 (SSPLSSLRSSKGIPSK), 1044–1096 (IHQQ…NNNN), and 1262–1301 (NNLNNNNGNKENSSSSSSSSSSTSTTPSITKKSSGSISKG). Residues 804–1484 (IWDIYSPLIE…DQIILWSSFF (681 aa)) form the Myotubularin phosphatase domain. 16 LRR repeats span residues 1510–1526 (SQKLTFLSIDRNLLSYF), 1527–1549 (STLTKLNLSRNYFNTFPIEIILL), 1550–1572 (SNLTHLWLQDNRIKSIPSSLLKL), 1576–1599 (KLKLQEFDLSHNLLESLHKSIYTL), 1600–1622 (STLTKLVLDNNKLIIIPESISKM), 1624–1645 (QLKCLSVQNNRLSSFPQALSLC), 1646–1668 (VGLEELYVQNNQIRELPLGFFKL), 1670–1691 (SLRMLDLRNNQITKFKCHKLDD), 1697–1720 (MNEIIHFRMGPNPLQKLSNQMFEM), 1722–1743 (SLIHLELTGCSLSTVPLKLLDN), 1744–1770 (LVNLEALYLNQNKLSEISIDFKRLFKL), 1772–1789 (VLDLSDNQFTNVPIHAML), 1790–1812 (PSLKKLYLHNNQLYNISFNDFNL), 1814–1835 (LLSELRLDGNKLTYVSPSIGTK), 1837–1861 (LSLTLLNLDRNPQITTLPHTLALLK), and 1863–1887 (LKSLIVNSNIMESPFRELETTDAIL). The span at 1932-1947 (SKEREKEKEKEKEKEK) shows a compositional bias: basic and acidic residues. Disordered stretches follow at residues 1932–1963 (SKEREKEKEKEKEKEKEKKHKNIGYGSKDKDK), 2190–2389 (NNNN…NNGS), 2507–2567 (APST…LQTP), and 2674–2704 (SNQQQQQQQQSSTQHQHQHHHHQQQQQTSIN). Composition is skewed to low complexity over residues 2190–2205 (NNNNNNNNNNNNNNNN), 2216–2389 (SINN…NNGS), 2522–2567 (NNTS…LQTP), and 2676–2688 (QQQQQQQQSSTQH). One can recognise a Protein kinase domain in the interval 3008–3269 (ELDPNPIGEG…KKLEEIELIL (262 aa)). ATP is bound by residues 3014–3022 (IGEGGTATV) and K3035. D3132 (proton acceptor) is an active-site residue. Residues 3311 to 3333 (QQQKQQQLQQQKQSPKQLQQQKP) show a composition bias toward low complexity. Positions 3311–3365 (QQQKQQQLQQQKQSPKQLQQQKPLPTPPKQLSNNDSTPTKPLDDSSDSSSEDSNN) are disordered. Positions 3354-3365 (DSSDSSSEDSNN) are enriched in acidic residues.

This sequence belongs to the protein kinase superfamily. TKL Ser/Thr protein kinase family. ROCO subfamily.

It carries out the reaction L-seryl-[protein] + ATP = O-phospho-L-seryl-[protein] + ADP + H(+). The enzyme catalyses L-threonyl-[protein] + ATP = O-phospho-L-threonyl-[protein] + ADP + H(+). The polypeptide is Probable serine/threonine-protein kinase roco9 (roco9) (Dictyostelium discoideum (Social amoeba)).